A 260-amino-acid chain; its full sequence is Trans-aconitate 2-methyltransferase (260 aa).

Belongs to the methyltransferase superfamily. Tam family.

The protein resides in the cytoplasm. It carries out the reaction trans-aconitate + S-adenosyl-L-methionine = (E)-3-(methoxycarbonyl)pent-2-enedioate + S-adenosyl-L-homocysteine. Catalyzes the S-adenosylmethionine monomethyl esterification of trans-aconitate. This is Trans-aconitate 2-methyltransferase from Methylobacterium radiotolerans (strain ATCC 27329 / DSM 1819 / JCM 2831 / NBRC 15690 / NCIMB 10815 / 0-1).